The following is a 134-amino-acid chain: Small ribosomal subunit protein uS8c (134 aa).

Belongs to the universal ribosomal protein uS8 family. As to quaternary structure, part of the 30S ribosomal subunit.

It localises to the plastid. The protein localises to the chloroplast. Functionally, one of the primary rRNA binding proteins, it binds directly to 16S rRNA central domain where it helps coordinate assembly of the platform of the 30S subunit. The chain is Small ribosomal subunit protein uS8c (rps8) from Eucalyptus globulus subsp. globulus (Tasmanian blue gum).